A 109-amino-acid chain; its full sequence is Aquaporin-2 (109 aa).

Topologically, residues 1–6 (SVAFSR) are cytoplasmic. The helical transmembrane segment at 7-27 (AVFAEFLATLLFVFFGLGSAL) threads the bilayer. Over 28-35 (NWPQALPS) the chain is Extracellular. Residues 36-54 (VLQIAMAFGLGIGTLVQAL) traverse the membrane as a helical segment. Over 55–59 (GHVSG) the chain is Cytoplasmic. The discontinuously helical intramembrane region spans 60–69 (AHINPAVTVA). The short motif at 63–65 (NPA) is the NPA 1 element. The Cytoplasmic portion of the chain corresponds to 70 to 80 (CLVGCHVSFLR). Residues 81 to 102 (AAFYVAAQLLGAVAGAALLHEI) form a helical membrane-spanning segment. The Extracellular portion of the chain corresponds to 103-109 (TPPHVRG).

This sequence belongs to the MIP/aquaporin (TC 1.A.8) family. In terms of assembly, homotetramer. In terms of processing, serine phosphorylation is necessary and sufficient for expression at the apical membrane. Endocytosis is not phosphorylation-dependent. Post-translationally, N-glycosylated.

The protein resides in the apical cell membrane. The protein localises to the basolateral cell membrane. Its subcellular location is the cell membrane. It localises to the cytoplasmic vesicle membrane. It is found in the golgi apparatus. The protein resides in the trans-Golgi network membrane. It carries out the reaction H2O(in) = H2O(out). The enzyme catalyses glycerol(in) = glycerol(out). Functionally, forms a water-specific channel that provides the plasma membranes of renal collecting duct with high permeability to water, thereby permitting water to move in the direction of an osmotic gradient. Plays an essential role in renal water homeostasis. Could also be permeable to glycerol. The chain is Aquaporin-2 from Canis lupus familiaris (Dog).